Here is a 278-residue protein sequence, read N- to C-terminus: Fe(II)/2-oxoglutarate-dependent dioxygenase nvfI (278 aa).

This sequence belongs to the asaB hydroxylase/desaturase family.

The enzyme catalyses asnovolin A + 2-oxoglutarate + 2 O2 = fumigatonoid A + succinate + CO2. It participates in secondary metabolite biosynthesis; terpenoid biosynthesis. Fe(II)/2-oxoglutarate-dependent dioxygenase; part of the gene cluster that mediates the biosynthesis of novofumigatonin, a heavily oxygenated meroterpenoid containing a unique orthoester moiety. The first step of the pathway is the synthesis of 3,5-dimethylorsellinic acid (DMOA) by the polyketide synthase nvfA via condensation of one acetyl-CoA starter unit with 3 malonyl-CoA units and 2 methylations. DMOA is then converted to farnesyl-DMOA by the farnesyltransferase nvfB. Epoxydation by FAD-dependent monooxygenase nvfK, followed by a protonation-initiated cyclization catalyzed by the terpene cyclase nvfL leads to the production of asnavolin H. The short chain dehydrogenase nvfC then as a 3-OH dehydrogenase of asnovolin H to yield chemesin D. There are two branches to synthesize asnovolin A from chemesin D. In one branch, chemesin D undergoes Baeyer-Villiger oxidation by nvfH, methylation by nvfJ, and enoyl reduction by the nvfM D enoylreductase that reduces the double bond between C-5'and C-6', to form respectively asnovolin I, asnovolin K, and asnovolin A. In the other branch, the methylation precedes the Baeyer-Villiger oxidation and the enoyl reduction to yield asnovolin A via the asnovolin J intermediate. Asnovolin A is further converted to fumigatonoid A by the Fe(II)/2-oxoglutarate-dependent dioxygenase nvfI that catalyzes an endoperoxidation reaction. The alpha/beta hydrolase nvfD then acts as an epimerase that converts fumigatonoid A to its C-5' epimer, which then undergoes spontaneous or nvfD-catalyzed lactonization. The following step utilizes the ketoreductase nvfG to produce fumigatonoid B. The dioxygenase nvfE further converts fumigatonoid B into fumigatonoid C. Finally the Fe(II)/2-oxoglutarate-dependent dioxygenase nvfF catalyzes two rounds of oxidation to transform fumigatonoid C into the end product, novofumigatonin A. The polypeptide is Fe(II)/2-oxoglutarate-dependent dioxygenase nvfI (Aspergillus novofumigatus (strain IBT 16806)).